A 96-amino-acid polypeptide reads, in one-letter code: Co-chaperonin GroES (96 aa).

This sequence belongs to the GroES chaperonin family. As to quaternary structure, heptamer of 7 subunits arranged in a ring. Interacts with the chaperonin GroEL.

It localises to the cytoplasm. Its function is as follows. Together with the chaperonin GroEL, plays an essential role in assisting protein folding. The GroEL-GroES system forms a nano-cage that allows encapsulation of the non-native substrate proteins and provides a physical environment optimized to promote and accelerate protein folding. GroES binds to the apical surface of the GroEL ring, thereby capping the opening of the GroEL channel. This Nitrosomonas eutropha (strain DSM 101675 / C91 / Nm57) protein is Co-chaperonin GroES.